A 598-amino-acid polypeptide reads, in one-letter code: Elongation factor 4 (598 aa).

Residues 4 to 186 (KHIRNFSIIA…VIVRQIPPPE (183 aa)) enclose the tr-type G domain. GTP is bound by residues 16 to 21 (DHGKST) and 133 to 136 (NKID).

It belongs to the TRAFAC class translation factor GTPase superfamily. Classic translation factor GTPase family. LepA subfamily.

The protein resides in the cell inner membrane. The catalysed reaction is GTP + H2O = GDP + phosphate + H(+). Required for accurate and efficient protein synthesis under certain stress conditions. May act as a fidelity factor of the translation reaction, by catalyzing a one-codon backward translocation of tRNAs on improperly translocated ribosomes. Back-translocation proceeds from a post-translocation (POST) complex to a pre-translocation (PRE) complex, thus giving elongation factor G a second chance to translocate the tRNAs correctly. Binds to ribosomes in a GTP-dependent manner. The sequence is that of Elongation factor 4 from Pseudoalteromonas atlantica (strain T6c / ATCC BAA-1087).